The following is a 393-amino-acid chain: NAD(P)H-quinone oxidoreductase subunit H, chloroplastic (393 aa).

This sequence belongs to the complex I 49 kDa subunit family. In terms of assembly, NDH is composed of at least 16 different subunits, 5 of which are encoded in the nucleus.

It is found in the plastid. It localises to the chloroplast thylakoid membrane. It carries out the reaction a plastoquinone + NADH + (n+1) H(+)(in) = a plastoquinol + NAD(+) + n H(+)(out). The catalysed reaction is a plastoquinone + NADPH + (n+1) H(+)(in) = a plastoquinol + NADP(+) + n H(+)(out). NDH shuttles electrons from NAD(P)H:plastoquinone, via FMN and iron-sulfur (Fe-S) centers, to quinones in the photosynthetic chain and possibly in a chloroplast respiratory chain. The immediate electron acceptor for the enzyme in this species is believed to be plastoquinone. Couples the redox reaction to proton translocation, and thus conserves the redox energy in a proton gradient. This chain is NAD(P)H-quinone oxidoreductase subunit H, chloroplastic, found in Nuphar advena (Common spatterdock).